Here is a 99-residue protein sequence, read N- to C-terminus: U11-barytoxin-Tl1a (99 aa).

Residues 1–21 (MKTLVLVAVLGLASLYLLSYA) form the signal peptide. A propeptide spanning residues 22 to 50 (SEVQQISRDEEDFRALMASFGGIFDTEER) is cleaved from the precursor. Disulfide bonds link Cys57–Cys71, Cys64–Cys76, and Cys70–Cys90.

This sequence belongs to the neurotoxin 10 (Hwtx-1) family. 25 (ICK4) subfamily. As to expression, expressed by the venom gland.

Its subcellular location is the secreted. In terms of biological role, ion channel inhibitor. The sequence is that of U11-barytoxin-Tl1a from Trittame loki (Brush-footed trapdoor spider).